The sequence spans 292 residues: 4-hydroxy-tetrahydrodipicolinate synthase (292 aa).

Thr-45 is a binding site for pyruvate. The Proton donor/acceptor role is filled by Tyr-133. The active-site Schiff-base intermediate with substrate is the Lys-161. Ile-203 lines the pyruvate pocket.

This sequence belongs to the DapA family. In terms of assembly, homotetramer; dimer of dimers.

It is found in the cytoplasm. The enzyme catalyses L-aspartate 4-semialdehyde + pyruvate = (2S,4S)-4-hydroxy-2,3,4,5-tetrahydrodipicolinate + H2O + H(+). It functions in the pathway amino-acid biosynthesis; L-lysine biosynthesis via DAP pathway; (S)-tetrahydrodipicolinate from L-aspartate: step 3/4. Its function is as follows. Catalyzes the condensation of (S)-aspartate-beta-semialdehyde [(S)-ASA] and pyruvate to 4-hydroxy-tetrahydrodipicolinate (HTPA). This Cronobacter sakazakii (strain ATCC BAA-894) (Enterobacter sakazakii) protein is 4-hydroxy-tetrahydrodipicolinate synthase.